The sequence spans 212 residues: Octanoyltransferase (212 aa).

Residues 34–208 (GQRQDTLILL…AFERQFNARC (175 aa)) form the BPL/LPL catalytic domain. Substrate-binding positions include 72–79 (RGGQVTYH), 139–141 (SIG), and 152–154 (GLS). Residue cysteine 170 is the Acyl-thioester intermediate of the active site.

The protein belongs to the LipB family.

It localises to the cytoplasm. The enzyme catalyses octanoyl-[ACP] + L-lysyl-[protein] = N(6)-octanoyl-L-lysyl-[protein] + holo-[ACP] + H(+). The protein operates within protein modification; protein lipoylation via endogenous pathway; protein N(6)-(lipoyl)lysine from octanoyl-[acyl-carrier-protein]: step 1/2. Its function is as follows. Catalyzes the transfer of endogenously produced octanoic acid from octanoyl-acyl-carrier-protein onto the lipoyl domains of lipoate-dependent enzymes. Lipoyl-ACP can also act as a substrate although octanoyl-ACP is likely to be the physiological substrate. The protein is Octanoyltransferase of Magnetococcus marinus (strain ATCC BAA-1437 / JCM 17883 / MC-1).